The sequence spans 89 residues: Exodeoxyribonuclease 7 small subunit (89 aa).

A disordered region spans residues 1–22; sequence MRKKSSSNKEETALHPPPENFE.

The protein belongs to the XseB family. In terms of assembly, heterooligomer composed of large and small subunits.

The protein resides in the cytoplasm. It catalyses the reaction Exonucleolytic cleavage in either 5'- to 3'- or 3'- to 5'-direction to yield nucleoside 5'-phosphates.. In terms of biological role, bidirectionally degrades single-stranded DNA into large acid-insoluble oligonucleotides, which are then degraded further into small acid-soluble oligonucleotides. The chain is Exodeoxyribonuclease 7 small subunit from Nitrosomonas europaea (strain ATCC 19718 / CIP 103999 / KCTC 2705 / NBRC 14298).